Reading from the N-terminus, the 361-residue chain is sn-glycerol-3-phosphate import ATP-binding protein UgpC (361 aa).

The 232-residue stretch at L4–I235 folds into the ABC transporter domain. G37–S44 serves as a coordination point for ATP.

It belongs to the ABC transporter superfamily. sn-glycerol-3-phosphate importer (TC 3.A.1.1.3) family. In terms of assembly, the complex is composed of two ATP-binding proteins (UgpC), two transmembrane proteins (UgpA and UgpE) and a solute-binding protein (UgpB).

The protein localises to the cell inner membrane. It catalyses the reaction sn-glycerol 3-phosphate(out) + ATP + H2O = sn-glycerol 3-phosphate(in) + ADP + phosphate + H(+). Part of the ABC transporter complex UgpBAEC involved in sn-glycerol-3-phosphate (G3P) import. Responsible for energy coupling to the transport system. This Bordetella avium (strain 197N) protein is sn-glycerol-3-phosphate import ATP-binding protein UgpC.